The following is a 774-amino-acid chain: Lysyl oxidase homolog 2 (774 aa).

An N-terminal signal peptide occupies residues 1-24; the sequence is MEGFLGFNHNHCFIVLFFVSLSLA. SRCR domains lie at 57–158, 187–301, 325–424, and 434–543; these read LRLA…VVCS, IRPI…ASCV, VRLK…VRCN, and LRLV…VSCS. 9 disulfides stabilise this stretch: cysteine 83–cysteine 147, cysteine 96–cysteine 157, cysteine 127–cysteine 137, cysteine 217–cysteine 290, cysteine 230–cysteine 300, cysteine 264–cysteine 274, cysteine 350–cysteine 413, cysteine 363–cysteine 423, and cysteine 394–cysteine 404. Asparagine 287 carries an N-linked (GlcNAc...) asparagine glycan. The N-linked (GlcNAc...) asparagine glycan is linked to asparagine 454. Cystine bridges form between cysteine 463/cysteine 529, cysteine 476/cysteine 542, and cysteine 510/cysteine 520. Residues 547 to 751 are lysyl-oxidase like; sequence PDLVLNAELV…MYNSVHNGAN (205 aa). Ca(2+)-binding residues include aspartate 548 and leucine 549. Disulfide bonds link cysteine 572-cysteine 624, cysteine 578-cysteine 694, cysteine 656-cysteine 672, and cysteine 662-cysteine 684. The Cu cation site is built by histidine 625, histidine 627, and histidine 629. Asparagine 643 carries N-linked (GlcNAc...) asparagine glycosylation. Residues 652–688 constitute a cross-link (lysine tyrosylquinone (Lys-Tyr)); it reads KASFCLEDTECEADVQKQYECANFGEQGITVGCWDVY. Tyrosine 688 is subject to 2',4',5'-topaquinone. Glutamate 721, aspartate 723, asparagine 726, and asparagine 727 together coordinate Ca(2+).

It belongs to the lysyl oxidase family. Cu cation serves as cofactor. Requires lysine tyrosylquinone residue as cofactor. Post-translationally, the lysine tyrosylquinone cross-link (LTQ) is generated by condensation of the epsilon-amino group of a lysine with a topaquinone produced by oxidation of tyrosine.

The protein localises to the secreted. Its subcellular location is the extracellular space. It is found in the extracellular matrix. The protein resides in the basement membrane. It localises to the nucleus. The protein localises to the chromosome. Its subcellular location is the endoplasmic reticulum. The enzyme catalyses L-lysyl-[protein] + O2 + H2O = (S)-2-amino-6-oxohexanoyl-[protein] + H2O2 + NH4(+). Functionally, mediates the post-translational oxidative deamination of lysine residues on target proteins leading to the formation of deaminated lysine (allysine). Acts as a transcription corepressor and specifically mediates deamination of trimethylated 'Lys-4' of histone H3 (H3K4me3), a specific tag for epigenetic transcriptional activation. Shows no activity against histone H3 when it is trimethylated on 'Lys-9' (H3K9me3) or 'Lys-27' (H3K27me3) or when 'Lys-4' is monomethylated (H3K4me1) or dimethylated (H3K4me2). Also mediates deamination of methylated TAF10, a member of the transcription factor IID (TFIID) complex, which induces release of TAF10 from promoters, leading to inhibition of TFIID-dependent transcription. LOXL2-mediated deamination of TAF10 results in transcriptional repression of genes required for embryonic stem cell pluripotency including POU5F1/OCT4, NANOG, KLF4 and SOX2. Involved in epithelial to mesenchymal transition (EMT) via interaction with SNAI1 and participates in repression of E-cadherin CDH1, probably by mediating deamination of histone H3. During EMT, involved with SNAI1 in negatively regulating pericentromeric heterochromatin transcription. SNAI1 recruits LOXL2 to pericentromeric regions to oxidize histone H3 and repress transcription which leads to release of heterochromatin component CBX5/HP1A, enabling chromatin reorganization and acquisition of mesenchymal traits. Interacts with the endoplasmic reticulum protein HSPA5 which activates the IRE1-XBP1 pathway of the unfolded protein response, leading to expression of several transcription factors involved in EMT and subsequent EMT induction. When secreted into the extracellular matrix, promotes cross-linking of extracellular matrix proteins by mediating oxidative deamination of peptidyl lysine residues in precursors to fibrous collagen and elastin. Acts as a regulator of sprouting angiogenesis, probably via collagen IV scaffolding. Acts as a regulator of chondrocyte differentiation, probably by regulating expression of factors that control chondrocyte differentiation. This chain is Lysyl oxidase homolog 2 (LOXL2), found in Gallus gallus (Chicken).